A 46-amino-acid polypeptide reads, in one-letter code: Protein krueppel (46 aa).

C2H2-type zinc fingers lie at residues 1–4 (MRLH), 10–32 (YHCT…LRVH), and 38–46 (YACELCTSK).

It belongs to the krueppel C2H2-type zinc-finger protein family.

The protein resides in the nucleus. Its function is as follows. Krueppel is a gap class segmentation protein. This Lithobius forficatus (Centipede) protein is Protein krueppel (Kr).